A 1026-amino-acid polypeptide reads, in one-letter code: Multidrug resistance protein MdtC (1026 aa).

The next 11 helical transmembrane spans lie at 15–35 (ILIAAAITLCGILGFRLLPVA), 333–353 (EVEETLAISVALVILVVFLFL), 360–380 (LIPAVAVPVSLIGTFAAMYLC), 387–407 (LSLMALTIATGFVVDDAIVVL), 431–451 (VGFTVISMSLSLVAVFLPLLL), 463–483 (FAVTLSVAIGISLVVSLTLTP), 528–548 (LVGVVFLGTVALNIWLYIAIP), 853–873 (LILIVAAIATVYIVLGILYES), 897–917 (LFNAPFSLIALIGIMLLIGIV), 953–973 (PIMMTTLAALFGALPLVLSGG), and 984–1004 (ITIVGGLVMSQLLTLYTTPVV).

This sequence belongs to the resistance-nodulation-cell division (RND) (TC 2.A.6) family. MdtC subfamily. As to quaternary structure, part of a tripartite efflux system composed of MdtA, MdtB and MdtC. MdtC forms a heteromultimer with MdtB.

It localises to the cell inner membrane. This chain is Multidrug resistance protein MdtC, found in Salmonella newport (strain SL254).